The primary structure comprises 915 residues: Kinesin-like protein KIN-10A (915 aa).

Residues 1–16 (MAPPTPSPRPGPPPTP) are compositionally biased toward pro residues. 2 disordered regions span residues 1–28 (MAPP…KTPA) and 34–53 (HFPA…AGGT). The Kinesin motor domain occupies 56–391 (PVEVIGRIRN…LEYGAKAKCI (336 aa)). ATP is bound at residue 137–144 (GPTGSGKS). Residues 426-517 (NLQKENKLRE…QRLKEVEREK (92 aa)) adopt a coiled-coil conformation. Residues 676 to 718 (PAKKAFGDENNEPAKQTFGDENKQQPAKRVFGDENKDPSAWGA) form a disordered region.

It belongs to the TRAFAC class myosin-kinesin ATPase superfamily. Kinesin family. KIN-10 subfamily.

The chain is Kinesin-like protein KIN-10A from Oryza sativa subsp. japonica (Rice).